Reading from the N-terminus, the 418-residue chain is Deoxyribonuclease Tat-D (418 aa).

E185, H226, H277, and D327 together coordinate a divalent metal cation.

Belongs to the metallo-dependent hydrolases superfamily. TatD-type hydrolase family. Mg(2+) serves as cofactor.

The protein localises to the cytoplasm. In terms of biological role, has both endo- and exonuclease activities. Incises double-stranded DNA without obvious specificity via its endonuclease activity and excises the DNA from the 3'-to 5'-end by its exonuclease activity. May have a role in apoptosis. In Saccharomyces cerevisiae (strain ATCC 204508 / S288c) (Baker's yeast), this protein is Deoxyribonuclease Tat-D.